The sequence spans 421 residues: MGSRGLFERARKVIPSGVNSPVRYYAPYPFFAASASGGSIRDADGRKYTDLCNGYGALLLGHGRGEVVRAVSAQLRRGTLFCVPTEQEVELARLISGNYPSMESTRLVNTGGEATMTAIRLARGFTKRDRIIKFDGCYHGAHGSVLVKAGSGSAHLGISTSEGVPRGLARQTTVIPYNDEAAFEGAAADDVAAVIVEPVMGNMGVIPPKKGFLRLLRKLSSRLGMQLIFDETITGFRLSAGGAQEAFGVRPDITTLAKALGGGLPIAAVGGKKNIMERLAPGGSVYEASTFAGNPVSVSAALASIRTINRIKGRLYPRLERAAAALASSIADDAADLGLDRQINRVASIFQVFFTAEPVTDAASAKRADAARFDKMFRALLKNGVFVAPSQFEMASLSAAHTVEDLRNVSAAYRTALGAAR.

Residue lysine 258 is modified to N6-(pyridoxal phosphate)lysine.

The protein belongs to the class-III pyridoxal-phosphate-dependent aminotransferase family. HemL subfamily. Pyridoxal 5'-phosphate is required as a cofactor.

The protein localises to the cytoplasm. It catalyses the reaction (S)-4-amino-5-oxopentanoate = 5-aminolevulinate. It participates in porphyrin-containing compound metabolism; protoporphyrin-IX biosynthesis; 5-aminolevulinate from L-glutamyl-tRNA(Glu): step 2/2. The sequence is that of Glutamate-1-semialdehyde 2,1-aminomutase 1 from Cenarchaeum symbiosum (strain A).